A 449-amino-acid chain; its full sequence is Probable phosphoglucosamine mutase (449 aa).

Serine 96 functions as the Phosphoserine intermediate in the catalytic mechanism. Residues serine 96, aspartate 233, aspartate 235, and aspartate 237 each contribute to the Mg(2+) site. Residue serine 96 is modified to Phosphoserine.

This sequence belongs to the phosphohexose mutase family. Mg(2+) is required as a cofactor. Activated by phosphorylation.

The enzyme catalyses alpha-D-glucosamine 1-phosphate = D-glucosamine 6-phosphate. Its function is as follows. Catalyzes the conversion of glucosamine-6-phosphate to glucosamine-1-phosphate. This Thermococcus gammatolerans (strain DSM 15229 / JCM 11827 / EJ3) protein is Probable phosphoglucosamine mutase.